Here is a 288-residue protein sequence, read N- to C-terminus: MELRDLQIFQSVADQGSVSSAAKELNYVQSNVTTRIKQLENELKTPLFYRHKRGMTLTAEGRKMLVYVNKILQDVDELKQVFLDSETPSGILKIGTVETVSTLPTILSSYYKSYPNVDLSLQAGLTEELIREVLDHQLDGAFISGPIKHPLIEQYDVSTEKLMLVTQNKAFHIEEFTTTPLLVFNQGCGYRSKLERWLKDEGLLPKRIMEFNILETILNSVALGLGITLVPQSAVHHLSKAGKVHCHAIPEKYGSISTVFIRRKDSYMTNSMRSFLKTIEEHHHINML.

The HTH lysR-type domain occupies 1-58 (MELRDLQIFQSVADQGSVSSAAKELNYVQSNVTTRIKQLENELKTPLFYRHKRGMTLT). The segment at residues 18-37 (VSSAAKELNYVQSNVTTRIK) is a DNA-binding region (H-T-H motif).

Belongs to the LysR transcriptional regulatory family.

This Bacillus thuringiensis subsp. konkukian (strain 97-27) protein is HTH-type transcriptional regulator CzcR (czcR).